Reading from the N-terminus, the 219-residue chain is Translation initiation factor IF-3 (219 aa).

The protein belongs to the IF-3 family. Monomer.

The protein localises to the cytoplasm. IF-3 binds to the 30S ribosomal subunit and shifts the equilibrium between 70S ribosomes and their 50S and 30S subunits in favor of the free subunits, thus enhancing the availability of 30S subunits on which protein synthesis initiation begins. This chain is Translation initiation factor IF-3, found in Prochlorococcus marinus (strain MIT 9303).